Reading from the N-terminus, the 373-residue chain is 3 beta-hydroxysteroid dehydrogenase/Delta 5--&gt;4-isomerase type 2 (373 aa).

The Proton acceptor role is filled by Y155. K159 contributes to the NAD(+) binding site. A helical membrane pass occupies residues 288–308; that stretch reads LPLLYWLAFLLETVSFLLRPF.

Belongs to the 3-beta-HSD family. Adrenal glands, testes and ovaries.

The protein resides in the endoplasmic reticulum membrane. It is found in the mitochondrion membrane. The catalysed reaction is a 3beta-hydroxy-Delta(5)-steroid + NAD(+) = a 3-oxo-Delta(5)-steroid + NADH + H(+). It catalyses the reaction a 3-oxo-Delta(5)-steroid = a 3-oxo-Delta(4)-steroid. It functions in the pathway lipid metabolism; steroid biosynthesis. In terms of biological role, 3-beta-HSD is a bifunctional enzyme, that catalyzes the oxidative conversion of Delta(5)-ene-3-beta-hydroxy steroid, and the oxidative conversion of ketosteroids. The 3-beta-HSD enzymatic system plays a crucial role in the biosynthesis of all classes of hormonal steroids. In Rattus norvegicus (Rat), this protein is 3 beta-hydroxysteroid dehydrogenase/Delta 5--&gt;4-isomerase type 2 (Hsd3b).